The primary structure comprises 430 residues: Histidine--tRNA ligase (430 aa).

This sequence belongs to the class-II aminoacyl-tRNA synthetase family. In terms of assembly, homodimer.

The protein resides in the cytoplasm. It catalyses the reaction tRNA(His) + L-histidine + ATP = L-histidyl-tRNA(His) + AMP + diphosphate + H(+). The sequence is that of Histidine--tRNA ligase from Gloeothece citriformis (strain PCC 7424) (Cyanothece sp. (strain PCC 7424)).